A 73-amino-acid chain; its full sequence is Toxin Td5 (73 aa).

Positions 1–7 are cleaved as a signal peptide; the sequence is IGMVVEC. The LCN-type CS-alpha/beta domain occupies 8–70; the sequence is KDGYLVGNDG…IWNSATNRCR (63 aa). Intrachain disulfides connect Cys-18–Cys-69, Cys-22–Cys-44, Cys-30–Cys-50, and Cys-34–Cys-52. Arg-70 is subject to Arginine amide.

It belongs to the long (4 C-C) scorpion toxin superfamily. Sodium channel inhibitor family. Beta subfamily. In terms of tissue distribution, expressed by the venom gland.

The protein localises to the secreted. Its function is as follows. Beta toxins bind voltage-independently at site-4 of sodium channels (Nav) and shift the voltage of activation toward more negative potentials thereby affecting sodium channel activation and promoting spontaneous and repetitive firing. In Tityus discrepans (Venezuelan scorpion), this protein is Toxin Td5.